The sequence spans 442 residues: tRNA-2-methylthio-N(6)-dimethylallyladenosine synthase (442 aa).

The region spanning 5 to 122 (KKVFIKTLGC…LPEMIKQKQK (118 aa)) is the MTTase N-terminal domain. Positions 14, 51, 85, 159, 163, and 166 each coordinate [4Fe-4S] cluster. Residues 145 to 378 (KAEGAKAYVS…DLLNSNAQII (234 aa)) enclose the Radical SAM core domain. One can recognise a TRAM domain in the interval 380 to 442 (RQMVGTNQRI…LPNSLRGELI (63 aa)).

It belongs to the methylthiotransferase family. MiaB subfamily. In terms of assembly, monomer. The cofactor is [4Fe-4S] cluster.

It localises to the cytoplasm. It catalyses the reaction N(6)-dimethylallyladenosine(37) in tRNA + (sulfur carrier)-SH + AH2 + 2 S-adenosyl-L-methionine = 2-methylsulfanyl-N(6)-dimethylallyladenosine(37) in tRNA + (sulfur carrier)-H + 5'-deoxyadenosine + L-methionine + A + S-adenosyl-L-homocysteine + 2 H(+). Its function is as follows. Catalyzes the methylthiolation of N6-(dimethylallyl)adenosine (i(6)A), leading to the formation of 2-methylthio-N6-(dimethylallyl)adenosine (ms(2)i(6)A) at position 37 in tRNAs that read codons beginning with uridine. This chain is tRNA-2-methylthio-N(6)-dimethylallyladenosine synthase, found in Francisella tularensis subsp. holarctica (strain LVS).